The primary structure comprises 459 residues: MTILGTTFGVFFSLLQVVSGESGYAQNGDLEDAELDDYSFSCYSQLEVNGSQHSLTCAFEDPDVNTTNLEFEICGALVEVRCLNFRKLQEIYLIETKKFLLIGNSNICVKAGEKSLTCKNVNVATIVKPEAPFDLSVIYREGANDFLVTFNTSHLQKKYVKVLMHDVAYRHEKDENNWMHVNLSSTKLTLLQRKLQPKATYEIKVRSIPGDYFKGFWSEWSPSYYFRTPEINNHSGETNPTLLTISILSVLSVVLLVILACVLWKKRIKPIIWPSLPDHKKTLEHLCKKPSKNLIVSFNPESFLDCQIHRVDDIQARDEVEGFLQDTVPPQLEESETQRPGGDVQSPSWPSENVVTTPETFGRDSPLRCLAGNVSAHDAPILSSSRSLDCRESATNGPHVNQDLLLSLGTTNSTLPPSFPPQSRILTLNPVAQGQPILTFLGSNKEEAYVTMSSFCQKR.

Residues 1–20 (MTILGTTFGVFFSLLQVVSG) form the signal peptide. Residues 21–241 (ESGYAQNGDL…NNHSGETNPT (221 aa)) are Extracellular-facing. An intrachain disulfide couples Cys-42 to Cys-57. N-linked (GlcNAc...) asparagine glycosylation is found at Asn-49 and Asn-65. Disulfide bonds link Cys-74/Cys-82 and Cys-108/Cys-118. The region spanning 131-231 (APFDLSVIYR…PSYYFRTPEI (101 aa)) is the Fibronectin type-III domain. Asn-182 carries N-linked (GlcNAc...) asparagine glycosylation. The WSXWS motif signature appears at 217–221 (WSEWS). Residues 242-262 (LLTISILSVLSVVLLVILACV) traverse the membrane as a helical segment. Topologically, residues 263–459 (LWKKRIKPII…VTMSSFCQKR (197 aa)) are cytoplasmic. The Box 1 motif signature appears at 272-280 (IWPSLPDHK). Thr-282 is modified (phosphothreonine; by PKC). The interval 327-357 (TVPPQLEESETQRPGGDVQSPSWPSENVVTT) is disordered. Over residues 345-357 (QSPSWPSENVVTT) the composition is skewed to polar residues.

Belongs to the type I cytokine receptor family. Type 4 subfamily. In terms of assembly, the IL7 receptor is a heterodimer of IL7R and IL2RG. The TSLP receptor is a heterodimer of CRLF2 and IL7R. Interacts with CD53. Post-translationally, N-glycosylated IL-7Ralpha binds IL7 300-fold more tightly than the unglycosylated form. Ubiquitinated by MARCHF8; leading to lysosomal degradation.

It is found in the cell membrane. Receptor for interleukin-7. Also acts as a receptor for thymic stromal lymphopoietin (TSLP). This chain is Interleukin-7 receptor subunit alpha (IL7R), found in Callithrix jacchus (White-tufted-ear marmoset).